Here is a 265-residue protein sequence, read N- to C-terminus: Aquaporin-5 (265 aa).

At 1 to 12 (MKKEVCSLAFLK) the chain is on the cytoplasmic side. Residues 13-33 (AVFAEFLATLIFVFFGLASAL) traverse the membrane as a helical segment. Topologically, residues 34 to 39 (KWPSAL) are extracellular. The helical transmembrane segment at 40 to 60 (PTILQIALAFGLAIGTLAQAL) threads the bilayer. The Cytoplasmic segment spans residues 61 to 65 (GPVSG). The discontinuously helical intramembrane region spans 66–74 (GHINPAITL). The NPA 1 motif lies at 69-71 (NPA). The Cytoplasmic segment spans residues 75-87 (ALLVGNQISLLRA). The chain crosses the membrane as a helical span at residues 88-108 (VFYVVAQLVGAIAGAGILYGL). At 109–126 (APGNARGNLAVNSLNNNT) the chain is on the extracellular side. Residue Asn124 is glycosylated (N-linked (GlcNAc...) asparagine). Residues 127 to 147 (TPGQAVVVEMILTFQLALCIF) form a helical membrane-spanning segment. The Cytoplasmic portion of the chain corresponds to 148–158 (SSTDSRRTSPV). The helical transmembrane segment at 159–179 (GSPALSIGLSVTLGHLVGIYF) threads the bilayer. Thr180 is a topological domain (extracellular). The segment at residues 181-191 (GCSMNPARSFG) is an intramembrane region (discontinuously helical). Residues 185–187 (NPA) carry the NPA 2 motif. Residues 192-203 (PAVVMNRFSPSH) are Extracellular-facing. Residues 204-224 (WVFWVGPIVGAAVAAILYFYL) form a helical membrane-spanning segment. The Cytoplasmic segment spans residues 225–265 (LFPNSLSLSERVAVVKGTYESEEDWEEQREERKKTMELTAH).

Belongs to the MIP/aquaporin (TC 1.A.8) family. In terms of assembly, homotetramer; each monomer provides an independent water pore. Interacts with TRPV4; the interaction is probably indirect and regulates TRPV4 activation by hypotonicity.

It is found in the apical cell membrane. Its subcellular location is the cell membrane. It localises to the cytoplasmic vesicle membrane. The enzyme catalyses H2O(in) = H2O(out). Aquaporins form homotetrameric transmembrane channels, with each monomer independently mediating water transport across the plasma membrane along its osmotic gradient. Plays an important role in fluid secretion in salivary glands. Required for TRPV4 activation by hypotonicity. Together with TRPV4, controls regulatory volume decrease in salivary epithelial cells. Seems to play a redundant role in water transport in the eye, lung and in sweat glands. This is Aquaporin-5 from Sus scrofa (Pig).